The sequence spans 430 residues: Histidine--tRNA ligase (430 aa).

Belongs to the class-II aminoacyl-tRNA synthetase family. Homodimer.

It localises to the cytoplasm. It carries out the reaction tRNA(His) + L-histidine + ATP = L-histidyl-tRNA(His) + AMP + diphosphate + H(+). The sequence is that of Histidine--tRNA ligase from Synechococcus sp. (strain CC9902).